A 105-amino-acid chain; its full sequence is Thioredoxin (105 aa).

The Thioredoxin domain occupies 2-105 (VKQIDSKDAF…KLEATINEFV (104 aa)). The residue at position 3 (K3) is an N6-acetyllysine. Position 8 is an N6-succinyllysine (K8). Active-site nucleophile residues include C32 and C35. A disulfide bridge connects residues C32 and C35. K39 carries the N6-acetyllysine modification. 2 positions are modified to S-nitrosocysteine: C62 and C69. C73 bears the S-nitrosocysteine; alternate mark. N6-acetyllysine; alternate is present on K94. K94 bears the N6-succinyllysine; alternate mark.

Belongs to the thioredoxin family. Homodimer; disulfide-linked. Interacts with TXNIP through the redox-active site. Interacts with MAP3K5 and CASP3. Interacts with APEX1; the interaction stimulates the FOS/JUN AP-1 DNA-binding activity in a redox-dependent manner. In terms of processing, in the fully reduced protein, both Cys-69 and Cys-73 are nitrosylated in response to nitric oxide (NO). When two disulfide bonds are present in the protein, only Cys-73 is nitrosylated. Cys-73 can serve as donor for nitrosylation of target proteins.

It localises to the nucleus. The protein resides in the cytoplasm. It is found in the secreted. Participates in various redox reactions through the reversible oxidation of its active center dithiol to a disulfide and catalyzes dithiol-disulfide exchange reactions. Plays a role in the reversible S-nitrosylation of cysteine residues in target proteins, and thereby contributes to the response to intracellular nitric oxide. Nitrosylates the active site Cys of CASP3 in response to nitric oxide (NO), and thereby inhibits caspase-3 activity. Induces the FOS/JUN AP-1 DNA binding activity in ionizing radiation (IR) cells through its oxidation/reduction status and stimulates AP-1 transcriptional activity. In Callithrix jacchus (White-tufted-ear marmoset), this protein is Thioredoxin (TXN).